A 176-amino-acid polypeptide reads, in one-letter code: Late lactation protein A (176 aa).

An N-terminal signal peptide occupies residues 1-18; it reads MRVLFLTISLSLFSIIHA. Cysteines 78 and 171 form a disulfide.

It belongs to the calycin superfamily. Lipocalin family. In terms of tissue distribution, mammary gland specific. Secreted in milk.

The protein localises to the secreted. In terms of biological role, probably serves a role in the transport of a small ligand released during the hydrolysis of milk fat. The sequence is that of Late lactation protein A (LLPA) from Notamacropus eugenii (Tammar wallaby).